The sequence spans 205 residues: Fibroblast growth factor homolog (205 aa).

An N-terminal signal peptide occupies residues 1-17 (MHRLALVVATVAYLCAG).

This sequence belongs to the heparin-binding growth factors family.

This chain is Fibroblast growth factor homolog (FGF), found in Orgyia pseudotsugata multicapsid polyhedrosis virus (OpMNPV).